Consider the following 33-residue polypeptide: MQPGTGLSFDISQILKQGSDPKQKLPERQAIVL.

The tract at residues 1-33 (MQPGTGLSFDISQILKQGSDPKQKLPERQAIVL) is disordered.

This is an uncharacterized protein from Caenorhabditis elegans.